Here is a 610-residue protein sequence, read N- to C-terminus: Solute carrier family 23 member 3 (610 aa).

The span at Met1–Ser16 shows a compositional bias: polar residues. The segment at Met1 to Ser32 is disordered. At Met1 to Cys49 the chain is on the cytoplasmic side. The chain crosses the membrane as a helical span at residues Leu50–Leu70. The Extracellular segment spans residues Leu71–Gln85. Residues Leu86 to Ser106 traverse the membrane as a helical segment. At Arg107–Glu164 the chain is on the cytoplasmic side. The chain crosses the membrane as a helical span at residues Val165–Pro185. Residues Gly186–His187 are Extracellular-facing. The chain crosses the membrane as a helical span at residues Val188–Ala208. Topologically, residues His209–Glu211 are cytoplasmic. A helical transmembrane segment spans residues Val212–Val232. At Cys233 to Ser266 the chain is on the extracellular side. A helical membrane pass occupies residues Val267–Pro287. At Gln288–Ala316 the chain is on the cytoplasmic side. Residues Leu317–Leu337 form a helical membrane-spanning segment. At Cys338–Gly355 the chain is on the extracellular side. A helical transmembrane segment spans residues Leu356 to Ala376. At Ser377–Gln394 the chain is on the cytoplasmic side. The helical transmembrane segment at Val395 to Gln414 threads the bilayer. Residues Leu415 to Val423 lie on the Extracellular side of the membrane. Residues Val424–Ala446 traverse the membrane as a helical segment. The Cytoplasmic portion of the chain corresponds to Asp447–Arg452. A helical membrane pass occupies residues Asn453–Arg472. At Glu473–Asp486 the chain is on the extracellular side. Residues Val487–Leu507 form a helical membrane-spanning segment. Topologically, residues Glu508–Lys610 are cytoplasmic. Residues Pro571 to Lys610 are disordered. Acidic residues predominate over residues Asp573 to Ala588. The span at Ser601–Lys610 shows a compositional bias: basic and acidic residues.

This sequence belongs to the nucleobase:cation symporter-2 (NCS2) (TC 2.A.40) family.

Its subcellular location is the membrane. The catalysed reaction is hypoxanthine(out) + Na(+)(out) = hypoxanthine(in) + Na(+)(in). Its function is as follows. Acts as a sodium-dependent hypoxanthine transporter. May show xanthine-hypoxanthine exchange activity. The protein is Solute carrier family 23 member 3 (SLC23A3) of Homo sapiens (Human).